A 614-amino-acid polypeptide reads, in one-letter code: Zinc metalloproteinase-disintegrin-like Eoc1 (614 aa).

Residues 1-19 (MQVLLITISLAVLPYLGSS) form the signal peptide. Positions 20 to 193 (IILESGIVND…KASQLNLTPE (174 aa)) are excised as a propeptide. At Gln-194 the chain carries Pyrrolidone carboxylic acid. The region spanning 202–398 (KHIKVAIVAD…KMPQCILIKP (197 aa)) is the Peptidase M12B domain. A glycan (N-linked (GlcNAc...) asparagine) is linked at Asn-268. Disulfide bonds link Cys-313–Cys-393, Cys-353–Cys-377, and Cys-355–Cys-360. His-338 is a Zn(2+) binding site. Glu-339 is a catalytic residue. Residues His-342 and His-348 each coordinate Zn(2+). N-linked (GlcNAc...) asparagine glycosylation occurs at Asn-376. The 87-residue stretch at 406–492 (PPVCGNSLVE…ECPADQFQRN (87 aa)) folds into the Disintegrin domain. Positions 408, 411, 413, 415, 418, and 421 each coordinate Ca(2+). Intrachain disulfides connect Cys-409–Cys-438, Cys-420–Cys-433, Cys-422–Cys-428, Cys-432–Cys-455, Cys-446–Cys-452, Cys-451–Cys-477, Cys-464–Cys-484, Cys-471–Cys-503, Cys-496–Cys-508, Cys-515–Cys-565, Cys-530–Cys-576, Cys-543–Cys-553, Cys-560–Cys-602, and Cys-596–Cys-607. The D/ECD-tripeptide motif lies at 470–472 (ECD). Asn-498 carries N-linked (GlcNAc...) asparagine glycosylation.

The protein belongs to the venom metalloproteinase (M12B) family. P-III subfamily. P-IIIc sub-subfamily. In terms of assembly, heterodimer; disulfide-linked. Requires Zn(2+) as cofactor. In terms of tissue distribution, expressed by the venom gland.

It localises to the secreted. Functionally, this metalloproteinase hydrolyzes azocasein, and oxidized insulin B-chain. Also hydrolyzes the alpha-chain (FGA) and more slowly the beta-chain of fibrinogen (FGB), without affecting the gamma-chain. Does not cleave fibrin. Inhibits endothelial cell adhesion to extracellular matrix proteins such as fibrinogen, fibronectin, vitronectin, collagen I, and collagen IV. Induces apoptosis in vascular endothelial cells. The chain is Zinc metalloproteinase-disintegrin-like Eoc1 (Svmp3-Eoc1) from Echis ocellatus (Ocellated saw-scaled viper).